A 633-amino-acid chain; its full sequence is Guanylate-binding protein 6 (633 aa).

Positions 1–310 are GTPase domain (Globular); it reads MESGPKMLAP…EAINSGAVPC (310 aa). The 243-residue stretch at 35–277 folds into the GB1/RHD3-type G domain; sequence SQPVVVVAIV…FCSYIFTHAR (243 aa). GTP contacts are provided by residues 45-52, 67-69, and 97-101; these read GLYRTGKS, LGS, and DTEGL.

It belongs to the TRAFAC class dynamin-like GTPase superfamily. GB1/RHD3 GTPase family. GB1 subfamily. Post-translationally, (Microbial infection) Ubiquitinated by S.flexneri IpaH9.8, leading to its degradation by the proteasome, thereby preventing its ability to promote host defense against bacterial infection.

It localises to the cytoplasmic vesicle. The enzyme catalyses GTP + H2O = GDP + phosphate + H(+). Its function is as follows. Interferon (IFN)-inducible GTPase that plays important roles in innate immunity against a diverse range of bacterial, viral and protozoan pathogens, such as bacterial pathogens Listeria monocytogenes and Mycobacterium bovis BCG as well as the protozoan pathogen Toxoplasma gondii. Confers protection to several pathogens, including the bacterial pathogens Listeria monocytogenes and Mycobacterium bovis BCG as well as the protozoan pathogen Toxoplasma gondii. The sequence is that of Guanylate-binding protein 6 (GBP6) from Homo sapiens (Human).